We begin with the raw amino-acid sequence, 155 residues long: Endoribonuclease YbeY (155 aa).

Residues His120, His124, and His130 each coordinate Zn(2+).

It belongs to the endoribonuclease YbeY family. Zn(2+) serves as cofactor.

The protein localises to the cytoplasm. In terms of biological role, single strand-specific metallo-endoribonuclease involved in late-stage 70S ribosome quality control and in maturation of the 3' terminus of the 16S rRNA. The sequence is that of Endoribonuclease YbeY from Borreliella burgdorferi (strain ATCC 35210 / DSM 4680 / CIP 102532 / B31) (Borrelia burgdorferi).